The chain runs to 120 residues: NAD(P)H-quinone oxidoreductase subunit 3, chloroplastic (120 aa).

The next 3 helical transmembrane spans lie at 10-30 (FWFFLIIGAIIPTLAFTTSKL), 64-84 (MFALVFVIFDVETIFLYPWAM), and 89-109 (LGVYGFIEALIFVLILVIGLV).

Belongs to the complex I subunit 3 family. As to quaternary structure, NDH is composed of at least 16 different subunits, 5 of which are encoded in the nucleus.

Its subcellular location is the plastid. It is found in the chloroplast thylakoid membrane. It catalyses the reaction a plastoquinone + NADH + (n+1) H(+)(in) = a plastoquinol + NAD(+) + n H(+)(out). The catalysed reaction is a plastoquinone + NADPH + (n+1) H(+)(in) = a plastoquinol + NADP(+) + n H(+)(out). In terms of biological role, NDH shuttles electrons from NAD(P)H:plastoquinone, via FMN and iron-sulfur (Fe-S) centers, to quinones in the photosynthetic chain and possibly in a chloroplast respiratory chain. The immediate electron acceptor for the enzyme in this species is believed to be plastoquinone. Couples the redox reaction to proton translocation, and thus conserves the redox energy in a proton gradient. This chain is NAD(P)H-quinone oxidoreductase subunit 3, chloroplastic, found in Chaetosphaeridium globosum (Charophycean green alga).